Consider the following 828-residue polypeptide: Phenylalanine--tRNA ligase beta subunit (828 aa).

One can recognise a tRNA-binding domain in the interval 43–161; the sequence is LSKNTNLVVG…DQIALGSNAL (119 aa). The segment at 203-230 is disordered; the sequence is KKKEKKTINYKTKNSKDQTNRKTTPKLN. Residues 436-519 enclose the B5 domain; sequence RTNPTISLDL…RFYGCHKLPP (84 aa). The Mg(2+) site is built by aspartate 497, aspartate 503, and aspartate 507. Positions 736-828 constitute an FDX-ACB domain; it reads PKFPTVIRDL…LIKHFRIEIR (93 aa).

It belongs to the phenylalanyl-tRNA synthetase beta subunit family. Type 1 subfamily. In terms of assembly, tetramer of two alpha and two beta subunits. The cofactor is Mg(2+).

It localises to the cytoplasm. It carries out the reaction tRNA(Phe) + L-phenylalanine + ATP = L-phenylalanyl-tRNA(Phe) + AMP + diphosphate + H(+). In Aster yellows witches'-broom phytoplasma (strain AYWB), this protein is Phenylalanine--tRNA ligase beta subunit.